The following is a 455-amino-acid chain: Probable pectate lyase 6 (455 aa).

Positions 1–25 (MVNLGSYVFVFVALSLTVVVPSVQA) are cleaved as a signal peptide. 2 N-linked (GlcNAc...) asparagine glycosylation sites follow: N55 and N75. Residues D247, D271, and D275 each coordinate Ca(2+). R327 is an active-site residue.

Belongs to the polysaccharide lyase 1 family. Ca(2+) is required as a cofactor.

The enzyme catalyses Eliminative cleavage of (1-&gt;4)-alpha-D-galacturonan to give oligosaccharides with 4-deoxy-alpha-D-galact-4-enuronosyl groups at their non-reducing ends.. It participates in glycan metabolism; pectin degradation; 2-dehydro-3-deoxy-D-gluconate from pectin: step 2/5. The sequence is that of Probable pectate lyase 6 from Arabidopsis thaliana (Mouse-ear cress).